Reading from the N-terminus, the 103-residue chain is Large ribosomal subunit protein bL21 (103 aa).

This sequence belongs to the bacterial ribosomal protein bL21 family. Part of the 50S ribosomal subunit. Contacts protein L20.

In terms of biological role, this protein binds to 23S rRNA in the presence of protein L20. The protein is Large ribosomal subunit protein bL21 of Caldicellulosiruptor saccharolyticus (strain ATCC 43494 / DSM 8903 / Tp8T 6331).